We begin with the raw amino-acid sequence, 349 residues long: Isopentenyl-diphosphate delta-isomerase (349 aa).

Position 9–10 (9–10 (RK)) interacts with substrate. FMN contacts are provided by residues 65 to 67 (AMT), S95, and N124. 95-97 (STH) is a binding site for substrate. Position 154 (Q154) interacts with substrate. Residue E155 coordinates Mg(2+). FMN contacts are provided by residues K186, S211, T216, 262 to 264 (GLR), and 283 to 284 (SR).

The protein belongs to the IPP isomerase type 2 family. As to quaternary structure, homooctamer. Dimer of tetramers. FMN is required as a cofactor. The cofactor is NADPH. Requires Mg(2+) as cofactor.

The protein resides in the cytoplasm. It carries out the reaction isopentenyl diphosphate = dimethylallyl diphosphate. Its function is as follows. Involved in the biosynthesis of isoprenoids. Catalyzes the 1,3-allylic rearrangement of the homoallylic substrate isopentenyl (IPP) to its allylic isomer, dimethylallyl diphosphate (DMAPP). This is Isopentenyl-diphosphate delta-isomerase from Staphylococcus aureus.